The primary structure comprises 252 residues: Geranylgeranylglyceryl phosphate synthase (252 aa).

Mg(2+) contacts are provided by Asp22 and Ser51. Sn-glycerol 1-phosphate is bound by residues 170-176, 201-202, and 223-224; these read YFEAGSG, GG, and GS.

It belongs to the GGGP/HepGP synthase family. Group II subfamily. Mg(2+) serves as cofactor.

It localises to the cytoplasm. It catalyses the reaction sn-glycerol 1-phosphate + (2E,6E,10E)-geranylgeranyl diphosphate = sn-3-O-(geranylgeranyl)glycerol 1-phosphate + diphosphate. It participates in membrane lipid metabolism; glycerophospholipid metabolism. Prenyltransferase that catalyzes the transfer of the geranylgeranyl moiety of geranylgeranyl diphosphate (GGPP) to the C3 hydroxyl of sn-glycerol-1-phosphate (G1P). This reaction is the first ether-bond-formation step in the biosynthesis of archaeal membrane lipids. The chain is Geranylgeranylglyceryl phosphate synthase from Thermoplasma volcanium (strain ATCC 51530 / DSM 4299 / JCM 9571 / NBRC 15438 / GSS1).